Consider the following 506-residue polypeptide: Cobyric acid synthase (506 aa).

One can recognise a GATase cobBQ-type domain in the interval 251–448; that stretch reads DITIAIVQLP…LHGLFDSDAF (198 aa). Cys-332 functions as the Nucleophile in the catalytic mechanism. The active site involves His-440.

It belongs to the CobB/CobQ family. CobQ subfamily.

Its pathway is cofactor biosynthesis; adenosylcobalamin biosynthesis. Functionally, catalyzes amidations at positions B, D, E, and G on adenosylcobyrinic A,C-diamide. NH(2) groups are provided by glutamine, and one molecule of ATP is hydrogenolyzed for each amidation. The chain is Cobyric acid synthase from Salmonella arizonae (strain ATCC BAA-731 / CDC346-86 / RSK2980).